Reading from the N-terminus, the 153-residue chain is Guanyl-specific ribonuclease N1 (153 aa).

An N-terminal signal peptide occupies residues 1 to 20 (MVQLLSAFVSLLSVVAVSGA). The propeptide occupies 21–49 (AIPAPAPEAVVDVAPETATIEPTGNFTAQ). 2 disulfide bridges follow: Cys-51/Cys-59 and Cys-55/Cys-152. The active site involves His-89. Glu-107 functions as the Proton acceptor in the catalytic mechanism. Catalysis depends on His-141, which acts as the Proton donor.

Belongs to the ribonuclease N1/T1 family.

The enzyme catalyses [RNA] containing guanosine + H2O = an [RNA fragment]-3'-guanosine-3'-phosphate + a 5'-hydroxy-ribonucleotide-3'-[RNA fragment].. In Neurospora crassa (strain ATCC 24698 / 74-OR23-1A / CBS 708.71 / DSM 1257 / FGSC 987), this protein is Guanyl-specific ribonuclease N1 (grn).